A 400-amino-acid chain; its full sequence is Delta(12) fatty acid desaturase (400 aa).

A helical membrane pass occupies residues leucine 91–alanine 111. Positions histidine 112–histidine 116 match the Histidine box-1 motif. Positions histidine 148–histidine 152 match the Histidine box-2 motif. The next 3 helical transmembrane spans lie at isoleucine 199–methionine 219, phenylalanine 245–alanine 265, and tyrosine 277–histidine 297. The short motif at histidine 339–histidine 343 is the Histidine box-3 element.

This sequence belongs to the fatty acid desaturase type 1 family.

Its subcellular location is the membrane. It carries out the reaction (9Z)-octadecenoyl-CoA + 2 Fe(II)-[cytochrome b5] + O2 + 2 H(+) = (9Z,12Z)-octadecadienoyl-CoA + 2 Fe(III)-[cytochrome b5] + 2 H2O. It catalyses the reaction (9Z)-hexadecenoyl-CoA + 2 Fe(II)-[cytochrome b5] + O2 + 2 H(+) = (9Z,12Z)-hexadecadienoyl-CoA + 2 Fe(III)-[cytochrome b5] + 2 H2O. The protein operates within lipid metabolism; polyunsaturated fatty acid biosynthesis. In terms of biological role, catalyzes the desaturation of oleic acid (Delta(9)-18:1) to linoleic acid (Delta(9), Delta(12)-18:2). This Mortierella isabellina (Filamentous fungus) protein is Delta(12) fatty acid desaturase.